A 418-amino-acid polypeptide reads, in one-letter code: E3 ubiquitin-protein ligase pellino homolog 1 (418 aa).

Residues 13–200 (APVKYGELIV…MHPRNGFTED (188 aa)) enclose the FHA; atypical domain. Phosphoserine is present on S121. At T127 the chain carries Phosphothreonine. Residues 311-399 (CGHVHGYHNW…TFHAACPFCA (89 aa)) form a ring-like domain; necessary for ubiquitination of RIPK3 region.

This sequence belongs to the pellino family. As to quaternary structure, interacts with MAP3K7. Upon IL1B treatment, forms a complex with TRAF6, IRAK1, IRAK4 and MYD88; this complex recruits MAP3K7/TAK1, TAB1 and TAB2 to mediate NF-kappa-B activation. Direct binding of SMAD6 to PELI1 prevents the complex formation and hence negatively regulates IL1R-TLR signaling and eventually NF-kappa-B-mediated gene expression. Interacts (via atypical FHA domain) with RIPK3. Binds preferentially to the 'Thr-182' phosphorylated form of RIPK3. Interacts with RIPK1. Post-translationally, phosphorylation by IRAK1 and IRAK4 enhances its E3 ligase activity. Phosphorylated by ATM in response to DNA damage, promoting localization to DNA double-strand breaks (DSBs) and ability to mediate 'Lys-63'-linked ubiquitination of NBN. In terms of processing, sumoylated.

It is found in the chromosome. The enzyme catalyses S-ubiquitinyl-[E2 ubiquitin-conjugating enzyme]-L-cysteine + [acceptor protein]-L-lysine = [E2 ubiquitin-conjugating enzyme]-L-cysteine + N(6)-ubiquitinyl-[acceptor protein]-L-lysine.. Its pathway is protein modification; protein ubiquitination. Functionally, E3 ubiquitin ligase catalyzing the covalent attachment of ubiquitin moieties onto substrate proteins. Involved in the TLR and IL-1 signaling pathways via interaction with the complex containing IRAK kinases and TRAF6. Acts as a positive regulator of inflammatory response in microglia through activation of NF-kappa-B and MAP kinase. Mediates 'Lys-63'-linked polyubiquitination of IRAK1 allowing subsequent NF-kappa-B activation. Conjugates 'Lys-63'-linked ubiquitin chains to the adapter protein ASC/PYCARD, which in turn is crucial for NLRP3 inflammasome activation. Mediates 'Lys-48'-linked polyubiquitination of RIPK3 leading to its subsequent proteasome-dependent degradation; preferentially recognizes and mediates the degradation of the 'Thr-182' phosphorylated form of RIPK3. Negatively regulates necroptosis by reducing RIPK3 expression. Mediates 'Lys-63'-linked ubiquitination of RIPK1. Following phosphorylation by ATM, catalyzes 'Lys-63'-linked ubiquitination of NBN, promoting DNA repair via homologous recombination. Negatively regulates activation of the metabolic mTORC1 signaling pathway by mediating 'Lys-63'-linked ubiquitination of mTORC1-inhibitory protein TSC1 and thereby promoting TSC1/TSC2 complex stability. This chain is E3 ubiquitin-protein ligase pellino homolog 1 (Peli1), found in Mus musculus (Mouse).